The primary structure comprises 1367 residues: DNA polymerase III PolC-type (1367 aa).

An Exonuclease domain is found at 358–513 (FVVLDFETTG…DDARVTAQVF (156 aa)).

The protein belongs to the DNA polymerase type-C family. PolC subfamily.

It localises to the cytoplasm. It catalyses the reaction DNA(n) + a 2'-deoxyribonucleoside 5'-triphosphate = DNA(n+1) + diphosphate. Functionally, required for replicative DNA synthesis. This DNA polymerase also exhibits 3' to 5' exonuclease activity. In Thermotoga maritima (strain ATCC 43589 / DSM 3109 / JCM 10099 / NBRC 100826 / MSB8), this protein is DNA polymerase III PolC-type.